We begin with the raw amino-acid sequence, 158 residues long: MAKQKTDPNYKVIAENRRARFDYAIEQDLECGIMLEGSEVKSLRAGGSNIAESYAAVEEGELWLVNSYIAPYEQAKVFKHEERRRRKLLVSRKEMADLWNATQRKGMTLVPLVLYFNHRGMAKIKIGIAKGKKNHDKREAQAKRDWSRQKQRLLKDHG.

Residues 130–158 (KGKKNHDKREAQAKRDWSRQKQRLLKDHG) form a disordered region. A compositionally biased stretch (basic and acidic residues) spans 136–158 (DKREAQAKRDWSRQKQRLLKDHG).

This sequence belongs to the SmpB family.

The protein resides in the cytoplasm. Its function is as follows. Required for rescue of stalled ribosomes mediated by trans-translation. Binds to transfer-messenger RNA (tmRNA), required for stable association of tmRNA with ribosomes. tmRNA and SmpB together mimic tRNA shape, replacing the anticodon stem-loop with SmpB. tmRNA is encoded by the ssrA gene; the 2 termini fold to resemble tRNA(Ala) and it encodes a 'tag peptide', a short internal open reading frame. During trans-translation Ala-aminoacylated tmRNA acts like a tRNA, entering the A-site of stalled ribosomes, displacing the stalled mRNA. The ribosome then switches to translate the ORF on the tmRNA; the nascent peptide is terminated with the 'tag peptide' encoded by the tmRNA and targeted for degradation. The ribosome is freed to recommence translation, which seems to be the essential function of trans-translation. This chain is SsrA-binding protein, found in Ruegeria sp. (strain TM1040) (Silicibacter sp.).